The chain runs to 334 residues: Malate dehydrogenase, cytoplasmic (334 aa).

Serine 2 bears the N-acetylserine mark. NAD(+) contacts are provided by residues glycine 11–alanine 17 and aspartate 42. Substrate-binding residues include arginine 92 and arginine 98. Asparagine 105 contributes to the NAD(+) binding site. An N6-succinyllysine modification is found at lysine 110. An NAD(+)-binding site is contributed by glutamine 112. N6-acetyllysine occurs at positions 118 and 121. Residue valine 129 to asparagine 131 coordinates NAD(+). Asparagine 131 and arginine 162 together coordinate substrate. The Proton acceptor role is filled by histidine 187. Lysine 214 carries the N6-succinyllysine modification. At serine 217 the chain carries Phosphoserine. Residue arginine 230 is modified to Omega-N-methylarginine. Serine 241 carries the post-translational modification Phosphoserine. An N6-acetyllysine; alternate modification is found at lysine 298. Lysine 298 bears the N6-succinyllysine; alternate mark. Phosphoserine is present on serine 309. Position 318 is an N6-succinyllysine (lysine 318). Phosphoserine is present on serine 333.

It belongs to the LDH/MDH superfamily. MDH type 2 family. Homodimer. In terms of processing, ISGylated. Acetylation at Lys-118 dramatically enhances enzymatic activity and promotes adipogenic differentiation.

It localises to the cytoplasm. It is found in the cytosol. It carries out the reaction (S)-malate + NAD(+) = oxaloacetate + NADH + H(+). It catalyses the reaction (2R)-2-hydroxy-3-(4-hydroxyphenyl)propanoate + NAD(+) = 3-(4-hydroxyphenyl)pyruvate + NADH + H(+). The enzyme catalyses (S)-2-hydroxyglutarate + NAD(+) = 2-oxoglutarate + NADH + H(+). Its function is as follows. Catalyzes the reduction of aromatic alpha-keto acids in the presence of NADH. Plays essential roles in the malate-aspartate shuttle and the tricarboxylic acid cycle, important in mitochondrial NADH supply for oxidative phosphorylation. Catalyzes the reduction of 2-oxoglutarate to 2-hydroxyglutarate, leading to elevated reactive oxygen species (ROS). This Bos taurus (Bovine) protein is Malate dehydrogenase, cytoplasmic (MDH1).